The chain runs to 122 residues: Atrial gland peptide B (122 aa).

The N-terminal stretch at 1-21 (MKANTMFIILCLTLSTLCVSS) is a signal peptide. The propeptide occupies 22 to 34 (QFTSVLGKIFVTN). Isoleucine 69 carries the isoleucine amide modification. Residues 73-122 (AAGGMEQSEGQNPETKSHSWRERSVLTPSLLSLGESLESGISKRISINQD) constitute a propeptide that is removed on maturation. Residues 74–95 (AGGMEQSEGQNPETKSHSWRER) are disordered.

The protein belongs to the molluscan ELH family.

The protein localises to the secreted. Its function is as follows. The atrial gland peptide A and peptide B precursors are the source of the 2 peptides that, upon release from this reproductive system gland, initiate the egg-laying process by exciting the bag cell neurons. These neurons, clustered in neural connectives near the abdominal ganglion, in turn release other peptides that act directly on the ganglion and also, via the circulating hemolymph, on many other organs to control the physiological processes of egg-laying. One of these other peptides is the egg-laying hormone. The chain is Atrial gland peptide B from Aplysia californica (California sea hare).